We begin with the raw amino-acid sequence, 460 residues long: Inactive ubiquitin carboxyl-terminal hydrolase MINDY-4B (460 aa).

Residues T41–S76 are disordered.

Belongs to the MINDY deubiquitinase family. FAM188 subfamily.

The sequence is that of Inactive ubiquitin carboxyl-terminal hydrolase MINDY-4B from Homo sapiens (Human).